A 250-amino-acid polypeptide reads, in one-letter code: Probable transcriptional regulatory protein Nther_1800 (250 aa).

Belongs to the TACO1 family.

It localises to the cytoplasm. This Natranaerobius thermophilus (strain ATCC BAA-1301 / DSM 18059 / JW/NM-WN-LF) protein is Probable transcriptional regulatory protein Nther_1800.